The following is a 251-amino-acid chain: Adenosylcobinamide-GDP ribazoletransferase (251 aa).

Transmembrane regions (helical) follow at residues 29–49 (FAGMSRWAPIVGLILGLILAV), 65–85 (SLLIVLLAIALTGGLHLDGAM), 110–130 (AFGAIAAIAIISLKTIALCYL), 136–156 (LLILLIPVWGRWAQVLAIVRY), 175–195 (AIDLLPGAIALVLGIGAIARF), and 198–218 (LTVALQLLAIGLLWAWATGAW).

The protein belongs to the CobS family. It depends on Mg(2+) as a cofactor.

The protein localises to the cell inner membrane. The enzyme catalyses alpha-ribazole + adenosylcob(III)inamide-GDP = adenosylcob(III)alamin + GMP + H(+). It catalyses the reaction alpha-ribazole 5'-phosphate + adenosylcob(III)inamide-GDP = adenosylcob(III)alamin 5'-phosphate + GMP + H(+). The protein operates within cofactor biosynthesis; adenosylcobalamin biosynthesis; adenosylcobalamin from cob(II)yrinate a,c-diamide: step 7/7. Joins adenosylcobinamide-GDP and alpha-ribazole to generate adenosylcobalamin (Ado-cobalamin). Also synthesizes adenosylcobalamin 5'-phosphate from adenosylcobinamide-GDP and alpha-ribazole 5'-phosphate. This Synechococcus elongatus (strain ATCC 33912 / PCC 7942 / FACHB-805) (Anacystis nidulans R2) protein is Adenosylcobinamide-GDP ribazoletransferase.